Reading from the N-terminus, the 425-residue chain is RNA-binding protein L (425 aa).

Residues 1–20 show a composition bias toward pro residues; that stretch reads MQQPPSQPQPGMGGPPPPPQ. The segment at 1–82 is disordered; that stretch reads MQQPPSQPQP…AAPPPQAMPA (82 aa). Low complexity predominate over residues 21–31; it reads GAAGQPPQWGA. The span at 32–80 shows a compositional bias: pro residues; sequence IPPPMPPHQYGAPPPQQPPAMWGQPPPQAHYGQVPPPQPYYAAPPPQAM. RRM domains are found at residues 90–170, 180–259, and 284–356; these read KTLW…WASA, YTIF…PAAN, and TTIF…WGRS.

This sequence belongs to the polyadenylate-binding RBP45 family. As to quaternary structure, interacts with RBP-P. Interacts with RAB5A.

Its subcellular location is the nucleus. It localises to the cytoplasm. Functionally, RNA-binding protein that binds to a cis-localization element or zipcode, within the 5'-CDS of prolamine RNA. Binds strongly to glutelin and prolamin mRNAs, particularly to 3'-UTR and zipcode RNA. Recognizes and binds to glutelin zipcode RNA, which is required for proper mRNA localization to cisternal endoplasmic reticulum. Recognizes and binds to prolamin zipcode RNA, which is required for proper mRNA localization to the protein body endoplasmic reticulum that delimits the prolamine intracisternal inclusion granules. Required for the correct localization of glutelin and prolamine mRNA in endosperm cells during grain development. RBP-L and RBP-P form a quaternary complex with the membrane trafficking factors NSF and RAB5A. This quaternay complex carries glutelin mRNAs for active transport on endosomes to the cortical endoplasmic reticulum membrane, and enables endosome-mediated glutelin mRNA transport in endosperm cells. The sequence is that of RNA-binding protein L from Oryza sativa subsp. japonica (Rice).